The chain runs to 328 residues: Bcl-2/adenovirus E1B 19 kDa-interacting protein 2-like protein (328 aa).

Basic and acidic residues predominate over residues 1–22; sequence MKLGELELREEWQDEEFPRLLP. The disordered stretch occupies residues 1 to 116; that stretch reads MKLGELELRE…DSGHEFEWED (116 aa). Positions 36–45 are enriched in polar residues; that stretch reads RGSQAGTPSS. Residues 76–89 show a composition bias toward low complexity; the sequence is ASPTRSASSSSAGS. A compositionally biased stretch (acidic residues) spans 92–105; sequence LEVDELETPSDSEQ. The segment covering 107 to 116 has biased composition (basic and acidic residues); that stretch reads DSGHEFEWED. One can recognise a CRAL-TRIO domain in the interval 162 to 323; that stretch reads DMTIIEPYKK…VVRQLDRDLH (162 aa).

As to quaternary structure, homodimer. Interacts with BCL2, ARHGAP1, MIF and GFER.

Its function is as follows. May be a bridge molecule between BCL2 and ARHGAP1/CDC42 in promoting cell death. In Mus musculus (Mouse), this protein is Bcl-2/adenovirus E1B 19 kDa-interacting protein 2-like protein (Bnipl).